The primary structure comprises 306 residues: Curved DNA-binding protein (306 aa).

The J domain maps to 5–69 (DYYAIMGVKP…QRRAEYDQMW (65 aa)).

It localises to the cytoplasm. The protein resides in the nucleoid. Functionally, DNA-binding protein that preferentially recognizes a curved DNA sequence. It is probably a functional analog of DnaJ; displays overlapping activities with DnaJ, but functions under different conditions, probably acting as a molecular chaperone in an adaptive response to environmental stresses other than heat shock. Lacks autonomous chaperone activity; binds native substrates and targets them for recognition by DnaK. Its activity is inhibited by the binding of CbpM. The chain is Curved DNA-binding protein from Escherichia coli O127:H6 (strain E2348/69 / EPEC).